A 497-amino-acid chain; its full sequence is Probable cytosol aminopeptidase (497 aa).

Mn(2+)-binding residues include K267 and D272. K279 is an active-site residue. 3 residues coordinate Mn(2+): D290, D349, and E351. The active site involves R353.

This sequence belongs to the peptidase M17 family. Mn(2+) is required as a cofactor.

Its subcellular location is the cytoplasm. It carries out the reaction Release of an N-terminal amino acid, Xaa-|-Yaa-, in which Xaa is preferably Leu, but may be other amino acids including Pro although not Arg or Lys, and Yaa may be Pro. Amino acid amides and methyl esters are also readily hydrolyzed, but rates on arylamides are exceedingly low.. It catalyses the reaction Release of an N-terminal amino acid, preferentially leucine, but not glutamic or aspartic acids.. Presumably involved in the processing and regular turnover of intracellular proteins. Catalyzes the removal of unsubstituted N-terminal amino acids from various peptides. This is Probable cytosol aminopeptidase from Pseudomonas entomophila (strain L48).